We begin with the raw amino-acid sequence, 768 residues long: Gephyrin (768 aa).

The interval 14 to 166 (QIRVGVLTVS…LPGSKKGSQE (153 aa)) is MPT Mo-transferase. Residues 153 to 348 (LIINLPGSKK…VDITKVARRH (196 aa)) form an interaction with GABARAP region. 2 disordered regions span residues 194–245 (DELE…DSSS) and 273–316 (TASL…ASRV). Residues 200 to 212 (PSPPPPLSPPPTT) show a composition bias toward pro residues. Phosphoserine occurs at positions 201 and 207. At Thr211 the chain carries Phosphothreonine. Ser213 carries the phosphoserine modification. Residue Cys225 is the site of S-palmitoyl cysteine attachment. Positions 274–299 (ASLSTTPSESPRAQATSRLSTASCPT) are enriched in polar residues. Position 275 is a phosphoserine (Ser275). Phosphothreonine occurs at positions 278 and 279. Residues Ser281 and Ser283 each carry the phosphoserine modification. Cys297 is lipidated: S-palmitoyl cysteine. Positions 326–768 (SSKENILRAS…VVDVMVIGRL (443 aa)) are MPT adenylyltransferase. Ser337 is modified (phosphoserine).

It in the N-terminal section; belongs to the MoaB/Mog family. This sequence in the C-terminal section; belongs to the MoeA family. In terms of assembly, homotrimer, homodimer and homooligomer. Interacts with SRGAP2 (via SH3 domain). Interacts with GLRB. Interacts with GABARAP. Interacts with GABRA3. GABRA3 and GLRB occupy overlapping binding sites. Interacts with ARHGAP32; IQSEC3, INSYN1 and INSYN2A. Mg(2+) serves as cofactor. Post-translationally, phosphorylated. In terms of processing, palmitoylated. Palmitoylation is stimulated by GABA type A receptors activity. Palmitoylation by ZDHHC12 regulates clustering at synapses. In terms of tissue distribution, expressed in tissues including spinal cord, brain, liver, kidney and lung.

It localises to the postsynaptic cell membrane. It is found in the cell membrane. Its subcellular location is the cytoplasm. The protein localises to the cytosol. The protein resides in the cytoskeleton. It localises to the cell projection. It is found in the dendrite. Its subcellular location is the postsynaptic density. The catalysed reaction is molybdopterin + ATP + H(+) = adenylyl-molybdopterin + diphosphate. It catalyses the reaction adenylyl-molybdopterin + molybdate = Mo-molybdopterin + AMP + H(+). The protein operates within cofactor biosynthesis; molybdopterin biosynthesis. With respect to regulation, inhibited by copper and tungsten. Its function is as follows. Microtubule-associated protein involved in membrane protein-cytoskeleton interactions. It is thought to anchor the inhibitory glycine receptor (GLYR) to subsynaptic microtubules. Acts as a major instructive molecule at inhibitory synapses, where it also clusters GABA type A receptors. Also has a catalytic activity and catalyzes two steps in the biosynthesis of the molybdenum cofactor. In the first step, molybdopterin is adenylated. Subsequently, molybdate is inserted into adenylated molybdopterin and AMP is released. This is Gephyrin (Gphn) from Rattus norvegicus (Rat).